We begin with the raw amino-acid sequence, 368 residues long: tRNA-specific 2-thiouridylase MnmA (368 aa).

Residues 24-31 (AMSGGVDS) and L50 contribute to the ATP site. C117 acts as the Nucleophile in catalysis. C117 and C213 are disulfide-bonded. An ATP-binding site is contributed by G141. Residues 163 to 165 (KDQ) are interaction with tRNA. C213 acts as the Cysteine persulfide intermediate in catalysis.

This sequence belongs to the MnmA/TRMU family.

Its subcellular location is the cytoplasm. The enzyme catalyses S-sulfanyl-L-cysteinyl-[protein] + uridine(34) in tRNA + AH2 + ATP = 2-thiouridine(34) in tRNA + L-cysteinyl-[protein] + A + AMP + diphosphate + H(+). Catalyzes the 2-thiolation of uridine at the wobble position (U34) of tRNA, leading to the formation of s(2)U34. The chain is tRNA-specific 2-thiouridylase MnmA from Wolbachia pipientis subsp. Culex pipiens (strain wPip).